Here is a 71-residue protein sequence, read N- to C-terminus: Ranatuerin-2Va (71 aa).

The N-terminal stretch at 1-22 is a signal peptide; it reads MFTLKKSFLLLFFLGTITLSLC. A propeptide spanning residues 23–43 is cleaved from the precursor; sequence EQERGADEDDGVEMTEEEVKR. C66 and C71 are oxidised to a cystine.

As to expression, expressed by the skin glands.

Its subcellular location is the secreted. Antimicrobial peptide. The sequence is that of Ranatuerin-2Va from Odorrana versabilis (Chinese bamboo leaf odorous frog).